The sequence spans 169 residues: Peptide methionine sulfoxide reductase MsrA (169 aa).

Residue C11 is part of the active site.

Belongs to the MsrA Met sulfoxide reductase family.

It catalyses the reaction L-methionyl-[protein] + [thioredoxin]-disulfide + H2O = L-methionyl-(S)-S-oxide-[protein] + [thioredoxin]-dithiol. The enzyme catalyses [thioredoxin]-disulfide + L-methionine + H2O = L-methionine (S)-S-oxide + [thioredoxin]-dithiol. Has an important function as a repair enzyme for proteins that have been inactivated by oxidation. Catalyzes the reversible oxidation-reduction of methionine sulfoxide in proteins to methionine. This Leifsonia xyli subsp. xyli (strain CTCB07) protein is Peptide methionine sulfoxide reductase MsrA.